The sequence spans 245 residues: AA9 family lytic polysaccharide monooxygenase B (245 aa).

Positions 1–18 (MKSAIFAAAVLGAAGVSA) are cleaved as a signal peptide. Residues histidine 19 and histidine 105 each contribute to the Cu(2+) site. Cysteine 116 and cysteine 120 form a disulfide bridge. Positions 179 and 188 each coordinate O2. Residue tyrosine 190 participates in Cu(2+) binding.

The protein belongs to the polysaccharide monooxygenase AA9 family. The cofactor is Cu(2+).

Its subcellular location is the secreted. The catalysed reaction is [(1-&gt;4)-beta-D-glucosyl]n+m + reduced acceptor + O2 = 4-dehydro-beta-D-glucosyl-[(1-&gt;4)-beta-D-glucosyl]n-1 + [(1-&gt;4)-beta-D-glucosyl]m + acceptor + H2O.. Lytic polysaccharide monooxygenase (LPMO) that depolymerizes crystalline and amorphous polysaccharides via the oxidation of scissile alpha- or beta-(1-4)-glycosidic bonds, yielding C1 or C4 oxidation products. Catalysis by LPMOs requires the reduction of the active-site copper from Cu(II) to Cu(I) by a reducing agent and H(2)O(2) or O(2) as a cosubstrate. Active on hemicelluloses, including xylan, glucomannan, and xyloglucan. Has no activity on ivory nut mannan (INM), a linear beta-1,4-linked mannan without substitutions. The protein is AA9 family lytic polysaccharide monooxygenase B of Malbranchea cinnamomea (Thermophilic fungus).